The sequence spans 402 residues: Phosphopentomutase (402 aa).

Residues D10, D301, H306, D342, H343, and H354 each contribute to the Mn(2+) site.

This sequence belongs to the phosphopentomutase family. Mn(2+) serves as cofactor.

Its subcellular location is the cytoplasm. The catalysed reaction is 2-deoxy-alpha-D-ribose 1-phosphate = 2-deoxy-D-ribose 5-phosphate. The enzyme catalyses alpha-D-ribose 1-phosphate = D-ribose 5-phosphate. The protein operates within carbohydrate degradation; 2-deoxy-D-ribose 1-phosphate degradation; D-glyceraldehyde 3-phosphate and acetaldehyde from 2-deoxy-alpha-D-ribose 1-phosphate: step 1/2. Its function is as follows. Isomerase that catalyzes the conversion of deoxy-ribose 1-phosphate (dRib-1-P) and ribose 1-phosphate (Rib-1-P) to deoxy-ribose 5-phosphate (dRib-5-P) and ribose 5-phosphate (Rib-5-P), respectively. The polypeptide is Phosphopentomutase (Aeromonas salmonicida (strain A449)).